The following is a 1388-amino-acid chain: MSERNQQDGQFDKLTIKIASDDVIRNEWSRGEIKKPETINYRTFKPEKGGLFCEKIFGPTRDWECACGKYKKIKHKGIVCDRCGVEVTLSKVRRERMAHIDLAVPVVHIWFFKTMPSRIGNVLGMTSADLERVIYYEEYVVINPGQTDLERKQLLNDTEYREAQEKWGRDSFVAKMGGEAIRDLLASEDLQTQLVELKDKLRKTKSQQARMKLAKRLKIIESFVSSDNKPEWMIMSCVPVIPPDLRPLVPLDGGRFATSDLNDLYRRVINRNNRLKAILKLKTPDVIVRNEKRMLQEAVDALFDNGRHGHPVMGAGNRPLKSLSEMLKGKQGRFRQNLLGKRVDYSGRSVIIVGPELKFNQCGLPKLMALELFEPFIVKRLKDQGYVYTIRSAKKMIQRHAPEVWDVLEDIIKGHPVLLNRAPTLHRLGIQAFEPVLIEGKAIRIHPLVCSAFNADFDGDQMAVYVPLSIEAQLEAKLLMMAPDNIFLPSSGKPVAVPSQDMTLGLYYLMLDPLYIRENHELKTRVFRDSEEVLLALQASGSYNWYEEGSKSPNGENRSDYLRGIRIHEKIKLRTENGIIETTPGRVVFNTIVPKELGFQNYSLPKKKMGELVMQCYKKAGLEATVRFLDNLKSIGFAEATKSALSMGVCDVKIPTIKQKILHDAHERVAVVRKQYEDGIITEGERYSKTISIWTEVSDVLSEELFKLISEVKDSTMNPLYLMMDSGARGNKSQIRQLGALRGLMAKPSGDIIESPITSNFREGLSVIEFSISSHGARKGLADTALKTADSGYLTRRLVDVAQDVIITEDDCGTLNGIDVSAIKQGQEELLPLKDRIFGRTVCEDIYQPGDSTKLLAKSGDTLTVLQAEAIDDSGIESIRIRSVLTCETRRGVCAKCYGINLANSRSISMGEAVGIIAAQSIGEPGTQLTMRTFHLGGIASAGLTPEIVADDNGILVYTDLRTVKTDEGNWVALNKNGRLNIVKDEGRTLDEYKKLLSTKSIEPLQAFNVELGTKILLEEGTKVKPGTRVAEWEQHNIPIICDRPGYVRYEDLVEGLSTERDVNKQTGQAELIVKQHRGELHPQVAIYADQACEDLVGTYPLPAGAIISVEEGEFATAGKMLARLPRSAIKTKDITGGLPRVAELFEARKPKDSAEIAKIDGVVDFRGVQKNKRIVVVRDEMTGMEEEHLISHTKHLIIQRGDHVVKGQQLTDGLVIPHEILDICGVRELQKYLVNQVQEVYRLQGVDINDKHIEIIVRQMLKKVRVIDPGDTSLLYGEEVDKKEFEVENQKVSQEGGKAAQATPVLLGITKASLSTESFISAASFQDTTRVLTEAACAGKTDYLVGFKENVIMGHIIPGGTGFDRHKRVKMFVDSEQEQGLEFNFAD.

Residues Cys65, Cys67, Cys80, and Cys83 each coordinate Zn(2+). Mg(2+)-binding residues include Asp456, Asp458, and Asp460. Zn(2+) contacts are provided by Cys812, Cys887, Cys894, and Cys897.

The protein belongs to the RNA polymerase beta' chain family. As to quaternary structure, the RNAP catalytic core consists of 2 alpha, 1 beta, 1 beta' and 1 omega subunit. When a sigma factor is associated with the core the holoenzyme is formed, which can initiate transcription. It depends on Mg(2+) as a cofactor. The cofactor is Zn(2+).

It catalyses the reaction RNA(n) + a ribonucleoside 5'-triphosphate = RNA(n+1) + diphosphate. DNA-dependent RNA polymerase catalyzes the transcription of DNA into RNA using the four ribonucleoside triphosphates as substrates. This Protochlamydia amoebophila (strain UWE25) protein is DNA-directed RNA polymerase subunit beta'.